Here is a 206-residue protein sequence, read N- to C-terminus: Ras-related protein Rab-18 (206 aa).

N-acetylmethionine is present on M1. Residues S17, G20, K21, S22, S23, D34, P35, T40, G66, K123, and D125 each coordinate GTP. S22 is a Mg(2+) binding site. 2 consecutive short sequence motifs (switch) follow at residues 31–45 (DTFD…GVDF) and 63–80 (DTAG…YYRG). A Mg(2+)-binding site is contributed by T40. S144 carries the phosphoserine modification. Residue A152 coordinates GTP. A lipid anchor (S-palmitoyl cysteine) is attached at C199. C203 bears the Cysteine methyl ester mark. C203 carries the S-geranylgeranyl cysteine lipid modification. A propeptide spans 204-206 (SVL) (removed in mature form).

This sequence belongs to the small GTPase superfamily. Rab family. Interacts (in GTP-bound form) with ZFYVE1. Interacts with ZW10 and this interaction is enhanced in the presence of ZFYVE1. Interacts with BSCL2. The cofactor is Mg(2+).

The protein resides in the endoplasmic reticulum membrane. The protein localises to the golgi apparatus. It is found in the cis-Golgi network membrane. It localises to the lipid droplet. Its subcellular location is the apical cell membrane. The catalysed reaction is GTP + H2O = GDP + phosphate + H(+). Regulated by guanine nucleotide exchange factors (GEFs) which promote the exchange of bound GDP for free GTP. Regulated by GTPase activating proteins (GAPs) which increase the GTP hydrolysis activity at the ER membrane. Inhibited by GDP dissociation inhibitors (GDIs) which prevent Rab-GDP dissociation. Its function is as follows. The small GTPases Rab are key regulators of intracellular membrane trafficking, from the formation of transport vesicles to their fusion with membranes. Rabs cycle between an inactive GDP-bound form and an active GTP-bound form that is able to recruit to membranes different sets of downstream effectors directly responsible for vesicle formation, movement, tethering and fusion. RAB18 is required for the localization of ZFYVE1 to lipid droplets and for its function in mediating the formation of endoplasmic reticulum-lipid droplets (ER-LD) contacts. Also required for maintaining endoplasmic reticulum structure. Plays a role in apical endocytosis/recycling. Plays a key role in eye and brain development and neurodegeneration. In Rattus norvegicus (Rat), this protein is Ras-related protein Rab-18.